Consider the following 354-residue polypeptide: Uroporphyrinogen decarboxylase (354 aa).

Substrate contacts are provided by residues 27 to 31 (RQAGR), Phe46, Asp77, Tyr154, Thr209, and His327.

This sequence belongs to the uroporphyrinogen decarboxylase family. Homodimer.

It localises to the cytoplasm. The catalysed reaction is uroporphyrinogen III + 4 H(+) = coproporphyrinogen III + 4 CO2. The protein operates within porphyrin-containing compound metabolism; protoporphyrin-IX biosynthesis; coproporphyrinogen-III from 5-aminolevulinate: step 4/4. Functionally, catalyzes the decarboxylation of four acetate groups of uroporphyrinogen-III to yield coproporphyrinogen-III. The polypeptide is Uroporphyrinogen decarboxylase (Salmonella typhi).